Here is a 276-residue protein sequence, read N- to C-terminus: Cytoskeleton protein RodZ (276 aa).

Residues 1-110 (MTSMRKKTIG…SSKKKKKKTS (110 aa)) are Cytoplasmic-facing. Residues 111 to 131 (FLPLFYFILFALSILIFVTYY) form a helical; Signal-anchor for type II membrane protein membrane-spanning segment. Residues 132–276 (VWNYIQTQPE…GQITVTFTKN (145 aa)) lie on the Extracellular side of the membrane.

The protein belongs to the RodZ family. In terms of assembly, interacts with MltG and MreC in the elongasome. Interacts with KhpB (also called EloR/Jag).

The protein resides in the cell membrane. In terms of biological role, cytoskeletal protein that is involved in cell-shape control through regulation of the length of the long axis. Probably part of the elongasome which synthesizes peripheral peptidoglycan. The chain is Cytoskeleton protein RodZ from Streptococcus pneumoniae (strain ATCC BAA-255 / R6).